Here is a 162-residue protein sequence, read N- to C-terminus: Nucleotide-binding protein ABSDF0503 (162 aa).

It belongs to the YajQ family.

Its function is as follows. Nucleotide-binding protein. The chain is Nucleotide-binding protein ABSDF0503 from Acinetobacter baumannii (strain SDF).